Here is a 59-residue protein sequence, read N- to C-terminus: uncharacterized protein (59 aa).

2 helical membrane passes run 1-21 (MNMY…YIFI) and 30-50 (GSWI…PYFY).

Its subcellular location is the cell membrane. This is an uncharacterized protein from Bacillus subtilis (strain 168).